Consider the following 154-residue polypeptide: Ecotin-like protein 2 (154 aa).

It belongs to the protease inhibitor I11 (ecotin) family.

The chain is Ecotin-like protein 2 from Trypanosoma brucei brucei (strain 927/4 GUTat10.1).